The chain runs to 82 residues: Turripeptide Gdm9.1 (82 aa).

Positions 1–23 are cleaved as a signal peptide; it reads MMAKLMITVMMVLLLSLQQGADG. Residues 24–46 constitute a propeptide that is removed on maturation; the sequence is RSERWRKNQMAASRIMRNLITAR. 4-hydroxyproline occurs at positions 49 and 50. 3 disulfides stabilise this stretch: Cys-53/Cys-68, Cys-58/Cys-72, and Cys-64/Cys-79. A 4-carboxyglutamate mark is found at Glu-60 and Glu-63.

The protein belongs to the Pg turripeptide superfamily. As to expression, expressed by the venom duct.

Its subcellular location is the secreted. The chain is Turripeptide Gdm9.1 from Gemmula diomedea (Gem-turris).